A 701-amino-acid polypeptide reads, in one-letter code: UvrABC system protein B (701 aa).

The region spanning 28–188 (RRIRAGERDV…VDVQYTRNDL (161 aa)) is the Helicase ATP-binding domain. An ATP-binding site is contributed by 41–48 (GATGTGKS). Positions 94–117 (YYDYYQPEAYIAQTDTYIEKDSSI) match the Beta-hairpin motif. The Helicase C-terminal domain maps to 432–598 (QIDDLIGEIR…PLRKKIADIL (167 aa)). The interval 606–636 (DDTEAAESVPIGGSGRNSSRGRRAQGEPGRA) is disordered. The UVR domain maps to 656 to 691 (ADLIKDLTSQMMVAARDLQFELAARFRDEIADLKKE).

Belongs to the UvrB family. Forms a heterotetramer with UvrA during the search for lesions. Interacts with UvrC in an incision complex.

The protein resides in the cytoplasm. In terms of biological role, the UvrABC repair system catalyzes the recognition and processing of DNA lesions. A damage recognition complex composed of 2 UvrA and 2 UvrB subunits scans DNA for abnormalities. Upon binding of the UvrA(2)B(2) complex to a putative damaged site, the DNA wraps around one UvrB monomer. DNA wrap is dependent on ATP binding by UvrB and probably causes local melting of the DNA helix, facilitating insertion of UvrB beta-hairpin between the DNA strands. Then UvrB probes one DNA strand for the presence of a lesion. If a lesion is found the UvrA subunits dissociate and the UvrB-DNA preincision complex is formed. This complex is subsequently bound by UvrC and the second UvrB is released. If no lesion is found, the DNA wraps around the other UvrB subunit that will check the other stand for damage. This Mycobacterium ulcerans (strain Agy99) protein is UvrABC system protein B.